Here is a 234-residue protein sequence, read N- to C-terminus: Probable GTP-binding protein EngB (234 aa).

The region spanning 23–209 (AVPEVAFAGR…QRTVAGWLCL (187 aa)) is the EngB-type G domain. Residues 31–38 (GRSNAGKS), 58–62 (GRTQH), 82–85 (DLPG), 149–152 (TKAD), and 187–190 (LFSS) each bind GTP. Residues S38 and T60 each coordinate Mg(2+). The disordered stretch occupies residues 210 to 234 (PEAMPPSPDAEPAKKTPSPDAQRGE).

This sequence belongs to the TRAFAC class TrmE-Era-EngA-EngB-Septin-like GTPase superfamily. EngB GTPase family. Mg(2+) serves as cofactor.

Its function is as follows. Necessary for normal cell division and for the maintenance of normal septation. The sequence is that of Probable GTP-binding protein EngB from Ralstonia nicotianae (strain ATCC BAA-1114 / GMI1000) (Ralstonia solanacearum).